We begin with the raw amino-acid sequence, 179 residues long: Large ribosomal subunit protein uL5 (179 aa).

The protein belongs to the universal ribosomal protein uL5 family. In terms of assembly, part of the 50S ribosomal subunit; part of the 5S rRNA/L5/L18/L25 subcomplex. Contacts the 5S rRNA and the P site tRNA. Forms a bridge to the 30S subunit in the 70S ribosome.

This is one of the proteins that bind and probably mediate the attachment of the 5S RNA into the large ribosomal subunit, where it forms part of the central protuberance. In the 70S ribosome it contacts protein S13 of the 30S subunit (bridge B1b), connecting the 2 subunits; this bridge is implicated in subunit movement. Contacts the P site tRNA; the 5S rRNA and some of its associated proteins might help stabilize positioning of ribosome-bound tRNAs. This is Large ribosomal subunit protein uL5 from Rickettsia typhi (strain ATCC VR-144 / Wilmington).